We begin with the raw amino-acid sequence, 435 residues long: Xylose isomerase (435 aa).

Catalysis depends on residues H99 and D102. 7 residues coordinate Mg(2+): E230, E266, H269, D294, D305, D307, and D337.

It belongs to the xylose isomerase family. In terms of assembly, homotetramer. It depends on Mg(2+) as a cofactor.

The protein resides in the cytoplasm. The enzyme catalyses alpha-D-xylose = alpha-D-xylulofuranose. The sequence is that of Xylose isomerase from Listeria welshimeri serovar 6b (strain ATCC 35897 / DSM 20650 / CCUG 15529 / CIP 8149 / NCTC 11857 / SLCC 5334 / V8).